Reading from the N-terminus, the 128-residue chain is Small ribosomal subunit protein uS9 (128 aa).

The protein belongs to the universal ribosomal protein uS9 family.

The polypeptide is Small ribosomal subunit protein uS9 (Christiangramia forsetii (strain DSM 17595 / CGMCC 1.15422 / KT0803) (Gramella forsetii)).